The chain runs to 447 residues: Phosphoglucosamine mutase (447 aa).

Residue serine 104 is the Phosphoserine intermediate of the active site. Residues serine 104, aspartate 243, aspartate 245, and aspartate 247 each coordinate Mg(2+). Position 104 is a phosphoserine (serine 104).

Belongs to the phosphohexose mutase family. Mg(2+) serves as cofactor. Post-translationally, activated by phosphorylation.

The catalysed reaction is alpha-D-glucosamine 1-phosphate = D-glucosamine 6-phosphate. Functionally, catalyzes the conversion of glucosamine-6-phosphate to glucosamine-1-phosphate. The polypeptide is Phosphoglucosamine mutase (Corynebacterium efficiens (strain DSM 44549 / YS-314 / AJ 12310 / JCM 11189 / NBRC 100395)).